A 167-amino-acid polypeptide reads, in one-letter code: Protein FAM163B (167 aa).

A helical membrane pass occupies residues 6-26 (VVITGGILATVILLCIIAVLC). Ser-40 bears the Phosphoserine mark.

The protein belongs to the FAM163 family.

It is found in the membrane. The protein is Protein FAM163B (Fam163b) of Mus musculus (Mouse).